Reading from the N-terminus, the 110-residue chain is Large ribosomal subunit protein uL22 (110 aa).

Belongs to the universal ribosomal protein uL22 family. Part of the 50S ribosomal subunit.

Its function is as follows. This protein binds specifically to 23S rRNA; its binding is stimulated by other ribosomal proteins, e.g. L4, L17, and L20. It is important during the early stages of 50S assembly. It makes multiple contacts with different domains of the 23S rRNA in the assembled 50S subunit and ribosome. In terms of biological role, the globular domain of the protein is located near the polypeptide exit tunnel on the outside of the subunit, while an extended beta-hairpin is found that lines the wall of the exit tunnel in the center of the 70S ribosome. This chain is Large ribosomal subunit protein uL22, found in Variovorax paradoxus (strain S110).